The primary structure comprises 406 residues: Kelch domain-containing protein 2 (406 aa).

Kelch repeat units lie at residues 31–85 (ERSG…NTEG), 92–136 (SGSC…ERID), 148–207 (LGVW…IWSQ), 221–259 (HACA…NELI), 271–311 (HSLT…IKFN), and 322–359 (HTAC…IFSV).

As to quaternary structure, component of a CRL2(KLHDC2) E3 ubiquitin-protein ligase complex, also named ECS(KLHDC2) complex, composed of CUL2, Elongin BC (ELOB and ELOC), RBX1 and substrate-specific adapter KLHDC2. May form oligomers as a KLHDC2-ELOB-ELOC complex; this interaction is autoinhibitory for the E3 ligase complex as the substrate-binding site of KLHDC2 is blocked in the oligomer. Interacts with CREB3; interaction is direct and specific as it does not interact with CREB1, ATF4, ATF6, JUN, FOS, CEBPA or herpes simplex virus transactivator VP16. Post-translationally, autoubiquitinated by the CRL2(KLHDC2) E3 ligase complex.

The protein resides in the nucleus. The protein operates within protein modification; protein ubiquitination. Its function is as follows. Substrate-recognition component of a Cul2-RING (CRL2) E3 ubiquitin-protein ligase complex of the DesCEND (destruction via C-end degrons) pathway, which recognizes a C-degron located at the extreme C terminus of target proteins, leading to their ubiquitination and degradation. The C-degron recognized by the DesCEND pathway is usually a motif of less than ten residues and can be present in full-length proteins, truncated proteins or proteolytically cleaved forms. The CRL2(KLHDC2) complex specifically recognizes proteins with a diglycine (Gly-Gly) at the C-terminus, leading to their ubiquitination and degradation. The CRL2(KLHDC2) complex mediates ubiquitination and degradation of truncated SELENOK and SELENOS selenoproteins produced by failed UGA/Sec decoding, which end with a diglycine. The CRL2(KLHDC2) complex also recognizes proteolytically cleaved proteins ending with Gly-Gly, such as the N-terminal fragment of USP1, leading to their degradation. May also act as an indirect repressor of CREB3-mediated transcription by interfering with CREB3-DNA-binding. The chain is Kelch domain-containing protein 2 from Bos taurus (Bovine).